A 128-amino-acid polypeptide reads, in one-letter code: Small ribosomal subunit protein uS13 (128 aa).

Over residues 95–118 (GLPVRGQRTHTNARTRKGPKKGLV) the composition is skewed to basic residues. The segment at 95–128 (GLPVRGQRTHTNARTRKGPKKGLVRKAAAPAPKA) is disordered.

The protein belongs to the universal ribosomal protein uS13 family. Part of the 30S ribosomal subunit. Forms a loose heterodimer with protein S19. Forms two bridges to the 50S subunit in the 70S ribosome.

Its function is as follows. Located at the top of the head of the 30S subunit, it contacts several helices of the 16S rRNA. In the 70S ribosome it contacts the 23S rRNA (bridge B1a) and protein L5 of the 50S subunit (bridge B1b), connecting the 2 subunits; these bridges are implicated in subunit movement. Contacts the tRNAs in the A and P-sites. In Anaeromyxobacter sp. (strain K), this protein is Small ribosomal subunit protein uS13.